Consider the following 231-residue polypeptide: Trypsin-2 (231 aa).

Residues 1-4 (AAFA) form the signal peptide. Residues 5-9 (TEDDK) constitute a propeptide, activation peptide. One can recognise a Peptidase S1 domain in the interval 10-229 (IVGGYECKAY…FNDWLTSTMA (220 aa)). Intrachain disulfides connect Cys16-Cys145, Cys34-Cys50, Cys118-Cys218, Cys125-Cys191, Cys156-Cys170, and Cys181-Cys205. His49 (charge relay system) is an active-site residue. Ca(2+) contacts are provided by Glu61, Asn63, Val66, and Glu71. Catalysis depends on Asp93, which acts as the Charge relay system. Ser185 functions as the Charge relay system in the catalytic mechanism.

The protein belongs to the peptidase S1 family. Ca(2+) is required as a cofactor.

The protein resides in the secreted. It localises to the extracellular space. It carries out the reaction Preferential cleavage: Arg-|-Xaa, Lys-|-Xaa.. The polypeptide is Trypsin-2 (Salmo salar (Atlantic salmon)).